A 196-amino-acid polypeptide reads, in one-letter code: MNTSRFIKCVTVGDGAVGKTCMLISYTSNTFPTDYVPTVFDNFSANVVVDGSTVNLGLWDTAGQEDYNRLRPLSYRGADVFLLAFSLISRASYENVHKKWIPELRHYAPNVPIVLVGTKLDLRDDKQFLSDNPGAISITTSQGEELKKMIGAVTYIECSSKTQQNVKAVFDVAIKIALRPPKPKRKPIKRRSCAFL.

A GTP-binding site is contributed by 13–20 (GDGAVGKT). Residues 35 to 43 (YVPTVFDNF) carry the Effector region motif. GTP-binding positions include 60–64 (DTAGQ) and 118–121 (TKLD). At C193 the chain carries Cysteine methyl ester. The S-geranylgeranyl cysteine moiety is linked to residue C193. A propeptide spans 194–196 (AFL) (removed in mature form).

It belongs to the small GTPase superfamily. Rho family.

It is found in the cytoplasm. Its subcellular location is the membrane. Inactive GDP-bound Rho GTPases reside in the cytosol, are found in a complex with Rho GDP-dissociation inhibitors (Rho GDIs), and are released from the GDI protein in order to translocate to membranes upon activation. The sequence is that of Rac-like GTP-binding protein RAC9 (RAC9) from Gossypium hirsutum (Upland cotton).